The following is a 416-amino-acid chain: Phakinin (416 aa).

Residues 1 to 48 (MSKRRVAADLPSGTNSSMPVQRHRVSSLRGTHSPSSLDSPPASRTSAV) form a disordered region. Residue serine 2 is modified to N-acetylserine. Residues 2–115 (SKRRVAADLP…HTTVEDLGGC (114 aa)) are head. Phosphoserine occurs at positions 27, 33, 36, and 91. Residues 28 to 48 (LRGTHSPSSLDSPPASRTSAV) show a composition bias toward polar residues. In terms of domain architecture, IF rod spans 105-416 (DHTTVEDLGG…HALLDREENN (312 aa)). 3 coiled-coil regions span residues 116 to 146 (LVEY…SKAK), 170 to 249 (LENA…VKVL), and 308 to 402 (QTQE…LQKD). The segment at 397–416 (SQLQKDVASYHALLDREENN) is tail.

Belongs to the intermediate filament family. In terms of assembly, part of a complex required for lens intermediate filament formation composed of BFSP1, BFSP2 and CRYAA. Found in a complex composed of PPL (via C-terminal linker domain), BFSP1 and BFSP2 in the retinal lens. Within the complex interacts with PPL (via C-terminal linker domain) and with BFSP1. Identified in a complex that contains VIM, EZR, AHNAK, BFSP1, BFSP2, ANK2, PLEC, PRX and spectrin. Interacts with LGSN. Interacts with VIM. In terms of tissue distribution, detected in retina lens fiber cells (at protein level). Also expressed in the lens epithelium, abundantly expressed in the anterior and anterolateral epithelium, less frequently expressed nearer the lens coronal equator (at protein level).

It is found in the cell membrane. The protein resides in the cytoplasm. It localises to the cytoskeleton. The protein localises to the cell cortex. Functionally, required for the correct formation of lens intermediate filaments as part of a complex composed of BFSP1, BFSP2 and CRYAA. Plays a role in maintenance of retinal lens optical clarity. This Mus musculus (Mouse) protein is Phakinin (Bfsp2).